A 677-amino-acid polypeptide reads, in one-letter code: Epithelial splicing regulatory protein 1 (677 aa).

RRM domains lie at 225–302, 326–406, and 445–525; these read TVVR…KATG, VIVR…RSTA, and DCVR…QCSA. Phosphoserine is present on S543. Position 578 is an omega-N-methylarginine (R578).

The protein belongs to the ESRP family.

The protein localises to the nucleus. Functionally, mRNA splicing factor that regulates the formation of epithelial cell-specific isoforms. Specifically regulates the expression of FGFR2-IIIb, an epithelial cell-specific isoform of FGFR2. Also regulates the splicing of CD44, CTNND1, ENAH, 3 transcripts that undergo changes in splicing during the epithelial-to-mesenchymal transition (EMT). Acts by directly binding specific sequences in mRNAs. Binds the GU-rich sequence motifs in the ISE/ISS-3, a cis-element regulatory region present in the mRNA of FGFR2. Regulates splicing and expression of genes involved in inner ear development, auditory hair cell differentiation, and cell fate specification in the cochlear epithelium. The chain is Epithelial splicing regulatory protein 1 (Esrp1) from Rattus norvegicus (Rat).